The primary structure comprises 254 residues: Phosphate import ATP-binding protein PstB (254 aa).

Residues 7 to 249 form the ABC transporter domain; the sequence is MVAESMSFYY…PREKQTEDYI (243 aa). An ATP-binding site is contributed by 39-46; it reads GPSGCGKS.

The protein belongs to the ABC transporter superfamily. Phosphate importer (TC 3.A.1.7) family. In terms of assembly, the complex is composed of two ATP-binding proteins (PstB), two transmembrane proteins (PstC and PstA) and a solute-binding protein (PstS).

The protein resides in the cell inner membrane. The enzyme catalyses phosphate(out) + ATP + H2O = ADP + 2 phosphate(in) + H(+). In terms of biological role, part of the ABC transporter complex PstSACB involved in phosphate import. Responsible for energy coupling to the transport system. This chain is Phosphate import ATP-binding protein PstB, found in Chlorobium chlorochromatii (strain CaD3).